The chain runs to 305 residues: Heme A synthase (305 aa).

Residues M1–K6 are Cytoplasmic-facing. The helical transmembrane segment at V7–T27 threads the bilayer. Over K28–R63 the chain is Extracellular. Cysteines 35 and 42 form a disulfide. The active site involves E59. Residue H62 coordinates heme o. A helical transmembrane segment spans residues M64–M84. The Cytoplasmic portion of the chain corresponds to K85–P92. Residues L93–V113 form a helical membrane-spanning segment. Residues W114–A122 lie on the Extracellular side of the membrane. Residues L123–F143 traverse the membrane as a helical segment. H124 contacts heme o. The Cytoplasmic portion of the chain corresponds to E144 to L160. Residues R161 to V181 traverse the membrane as a helical segment. At R182 to Y212 the chain is on the extracellular side. The chain crosses the membrane as a helical span at residues F213–F233. Residue H214 participates in heme b binding. Residues R234–R240 lie on the Cytoplasmic side of the membrane. The helical transmembrane segment at V241–A261 threads the bilayer. Residues L262–Y271 lie on the Extracellular side of the membrane. The chain crosses the membrane as a helical span at residues I272 to L292. H276 provides a ligand contact to heme b. Over L293–K305 the chain is Cytoplasmic.

It belongs to the COX15/CtaA family. Type 1 subfamily. As to quaternary structure, interacts with CtaB. Requires heme b as cofactor.

It is found in the cell membrane. The enzyme catalyses Fe(II)-heme o + 2 A + H2O = Fe(II)-heme a + 2 AH2. It participates in porphyrin-containing compound metabolism; heme A biosynthesis; heme A from heme O: step 1/1. Functionally, catalyzes the conversion of heme O to heme A by two successive hydroxylations of the methyl group at C8. The first hydroxylation forms heme I, the second hydroxylation results in an unstable dihydroxymethyl group, which spontaneously dehydrates, resulting in the formyl group of heme A. The protein is Heme A synthase of Listeria monocytogenes serotype 4b (strain F2365).